The primary structure comprises 415 residues: MSTMREMYPKNGRVILHVDMNCFFASVEIAHDPSLQGKPLAVAGNEKERKGIIITCSYEAREYGIRTTMPLWEAKRLCPQLVVRRPNFTLYREASFQMFQVLSRFTEKIQPVSIDEGYLDITDCYALGSPLEIAKMIQQALLTELQLPCSIGIAPNLFLAKTASDMKKPLGITVLRKRDIPEMIWPLSVEAMHGIGEKTAEKLNEIHIHTIEQLAKGDEHIIRAKIGKHGIDLQKRAKGTDDREVDPSQMGQHKSVGNSMTFSKDMDEEKELLDMLERLSKSVSKRLQKRTLVSYNIQIMIKYHDRRTVTRSKQLKNAIWEERDIFQAASRLWKQHWDGDSVRLLGVTATEIEWKTESVKQLDLFSFEEDAKKEPLLAVIDQINDKYGTPILQRGSQLLRKQEKSFQQKLENKFM.

Residues 15-196 (ILHVDMNCFF…LSVEAMHGIG (182 aa)) enclose the UmuC domain. Mg(2+) contacts are provided by aspartate 19 and aspartate 115. Residue glutamate 116 is part of the active site. The segment covering 235–246 (KRAKGTDDREVD) has biased composition (basic and acidic residues). The interval 235–260 (KRAKGTDDREVDPSQMGQHKSVGNSM) is disordered. A compositionally biased stretch (polar residues) spans 249 to 260 (QMGQHKSVGNSM).

The protein belongs to the DNA polymerase type-Y family. As to quaternary structure, monomer. The cofactor is Mg(2+).

Its subcellular location is the cytoplasm. It carries out the reaction DNA(n) + a 2'-deoxyribonucleoside 5'-triphosphate = DNA(n+1) + diphosphate. In terms of biological role, poorly processive, error-prone DNA polymerase involved in untargeted mutagenesis. Copies undamaged DNA at stalled replication forks, which arise in vivo from mismatched or misaligned primer ends. These misaligned primers can be extended by PolIV. Exhibits no 3'-5' exonuclease (proofreading) activity. May be involved in translesional synthesis, in conjunction with the beta clamp from PolIII. This is DNA polymerase IV from Bacillus cereus (strain ATCC 14579 / DSM 31 / CCUG 7414 / JCM 2152 / NBRC 15305 / NCIMB 9373 / NCTC 2599 / NRRL B-3711).